Consider the following 335-residue polypeptide: D-alanine--D-alanine ligase (335 aa).

Positions 124–330 (KMWFSALGVP…FTEYLSDVIS (207 aa)) constitute an ATP-grasp domain. Residue 154–209 (AFDTWGSVFIKAASQGSSVGCYKVDVRDNIAKVLEEAFGYAPYVVVEKTIKARELE) coordinates ATP. Positions 284, 297, and 299 each coordinate Mg(2+).

This sequence belongs to the D-alanine--D-alanine ligase family. The cofactor is Mg(2+). Requires Mn(2+) as cofactor.

Its subcellular location is the cytoplasm. It carries out the reaction 2 D-alanine + ATP = D-alanyl-D-alanine + ADP + phosphate + H(+). It functions in the pathway cell wall biogenesis; peptidoglycan biosynthesis. In terms of biological role, cell wall formation. In Shewanella denitrificans (strain OS217 / ATCC BAA-1090 / DSM 15013), this protein is D-alanine--D-alanine ligase.